The primary structure comprises 405 residues: CMP-sialic acid transporter 4 (405 aa).

Over M1 to N43 the chain is Cytoplasmic. A helical transmembrane segment spans residues F44 to S64. The Lumenal segment spans residues K65–P74. A helical transmembrane segment spans residues I75–I95. The Cytoplasmic segment spans residues Q96–A121. The helical transmembrane segment at L122–L142 threads the bilayer. Residue Y143 is a topological domain, lumenal. A helical membrane pass occupies residues F144–L164. The Cytoplasmic portion of the chain corresponds to K165–K171. A helical transmembrane segment spans residues F172–L192. The Lumenal portion of the chain corresponds to S193 to G203. A helical transmembrane segment spans residues L204–A224. At S225–N244 the chain is on the cytoplasmic side. Residues L245–F265 traverse the membrane as a helical segment. Over Q266–T281 the chain is Lumenal. Residues M282–A302 traverse the membrane as a helical segment. Over D303 to S322 the chain is Cytoplasmic. The chain crosses the membrane as a helical span at residues A323–I343. At S344–I405 the chain is on the lumenal side. Residues A386–I405 are disordered. The span at D389–I405 shows a compositional bias: basic and acidic residues.

Belongs to the nucleotide-sugar transporter family. CMP-Sialate:CMP antiporter (TC 2.A.7.12) subfamily.

It is found in the golgi apparatus membrane. Functionally, sugar transporter involved in the transport of CMP-sialic acid from the cytoplasm into the Golgi. May transport important nucleotide sugars such as CMP-Kdo (2-keto-3-deoxy-D-manno-octulosonic acid) in physiological conditions. This Oryza sativa subsp. indica (Rice) protein is CMP-sialic acid transporter 4.